Here is a 564-residue protein sequence, read N- to C-terminus: MNHDQAVLNRIWCETLFEELYRFGVRDVCVAPGSRSTPLALEANAHTSLKLHTHFDERGLGFLALGLAKASQRPVAVVVTSGTAVANLLPAVAEAGLTGEKLVLLTADRPIELVGCGANQAIAQQGIFSNHVCASLNLPSPNTQTSLNWLLTSVDQVLHQQAVSGHAVHINCPFPEPLYSNAPKSIYQSYIDTVAVWRAEGGIYSNKQMPLPMPTSIAEIEQRKAVVVIGSVTLQEAKQAHQFAAQMGWPVLCDPQSGTTSDWSGFDIWLQNPAARAQLSQCDLIIQFGRRLVSKRLHQWLEQQVQAGCDYWYVSPDFERDNQSHLPQQHFVCSIAAWLNVVTNREVQPVAWANELPRFSAEVNKQAREIAQSSLCEMMIALHLSSLVGSADLFLGNSLFVRMVDMVGQLHGVETFTNRGASGIDGLFATASGVQRARSNPMLLMIGDTSALYDLNSLALYSHQETPVVIVVTNNDGGAIFDLLPVPPQQKQALYQMPHGYRFEFAAKQFGLDYVRPTSMTELTERIVGHFAHGCGALLVEVNTPPNQASQHIKQLADHVRALV.

Belongs to the TPP enzyme family. MenD subfamily. In terms of assembly, homodimer. The cofactor is Mg(2+). Requires Mn(2+) as cofactor. It depends on thiamine diphosphate as a cofactor.

It catalyses the reaction isochorismate + 2-oxoglutarate + H(+) = 5-enolpyruvoyl-6-hydroxy-2-succinyl-cyclohex-3-ene-1-carboxylate + CO2. The protein operates within quinol/quinone metabolism; 1,4-dihydroxy-2-naphthoate biosynthesis; 1,4-dihydroxy-2-naphthoate from chorismate: step 2/7. Its pathway is quinol/quinone metabolism; menaquinone biosynthesis. Its function is as follows. Catalyzes the thiamine diphosphate-dependent decarboxylation of 2-oxoglutarate and the subsequent addition of the resulting succinic semialdehyde-thiamine pyrophosphate anion to isochorismate to yield 2-succinyl-5-enolpyruvyl-6-hydroxy-3-cyclohexene-1-carboxylate (SEPHCHC). The chain is 2-succinyl-5-enolpyruvyl-6-hydroxy-3-cyclohexene-1-carboxylate synthase from Vibrio vulnificus (strain YJ016).